The following is a 221-amino-acid chain: uncharacterized protein (221 aa).

The first 26 residues, 1–26 (MVRLVPRAFAATVALLAAGFSPATAS), serve as a signal peptide directing secretion.

This is an uncharacterized protein from Mycobacterium tuberculosis (strain ATCC 25618 / H37Rv).